The primary structure comprises 1352 residues: Astrotactin-2 (1352 aa).

A disordered region spans residues 1–31 (MAAAGARRSPGRGLGLRGRPRLGFHPGPPPP). The N-terminal stretch at 1–51 (MAAAGARRSPGRGLGLRGRPRLGFHPGPPPPPPPPLLLLFLLLLPPPPLLA) is a signal peptide. Residues 52 to 218 (GATAAAASRE…IVEEQMHILH (167 aa)) lie on the Lumenal side of the membrane. The N-linked (GlcNAc...) asparagine glycan is linked to N180. Residues 219-239 (ISVMGGLIALLLLLLVFTVAL) traverse the membrane as a helical segment. Residues 240–447 (YAQRRWQKRR…KGLLKSPVNK (208 aa)) are Cytoplasmic-facing. 2 disordered regions span residues 308–327 (EEEE…DEFG) and 375–421 (TPVE…ADDE). The segment covering 383 to 392 (QPASRSSTSA) has biased composition (polar residues). A helical membrane pass occupies residues 448–468 (TALTLIAVSSCILAMVCGNQM). At 469-1352 (SCPLTVKVTL…RNTYGETKGR (884 aa)) the chain is on the lumenal side. EGF-like domains follow at residues 523-563 (VRDL…HLCV), 664-708 (PVRD…SGCY), and 712-764 (KGID…KSCL). 9 cysteine pairs are disulfide-bonded: C527–C539, C535–C546, C548–C562, C668–C681, C675–C692, C694–C707, C716–C728, C724–C748, and C750–C763. N-linked (GlcNAc...) asparagine glycosylation is present at N796. 3 disulfide bridges follow: C838–C1000, C929–C990, and C996–C1003. N-linked (GlcNAc...) asparagine glycosylation occurs at N1033. Disulfide bonds link C1049-C1060, C1062-C1075, C1149-C1171, C1203-C1290, and C1311-C1334. The region spanning 1079 to 1201 (PQPVLRLSPT…SELSTVTLRT (123 aa)) is the Fibronectin type-III domain.

It belongs to the astrotactin family. As to quaternary structure, interacts with ASTN1; the interaction is not calcium-dependent. Detected in cerebellum granule neurons; not detected in astroglia (at protein level). Detected primarily in cerebellum, and at lower levels in brain cortex, olfactory bulb, hindbrain and hippocampus dentate gyrus. Between 6 and 10 days after birth, when granule cell migration occurs in the cerebellum, detected in granule cell precursors in the external germinal layer, the molecular layer, the internal granule layer and in Purkinje neurons. Detected in postmitotic neurons in adult cerebellum.

The protein resides in the membrane. Its subcellular location is the perikaryon. The protein localises to the cytoplasm. It is found in the cell cortex. It localises to the early endosome. The protein resides in the late endosome. Its subcellular location is the cytoplasmic vesicle. The protein localises to the clathrin-coated vesicle. Functionally, mediates recycling of the neuronal cell adhesion molecule ASTN1 to the anterior pole of the cell membrane in migrating neurons. Promotes ASTN1 internalization and intracellular transport of endocytosed ASTN1. Selectively binds inositol-4,5-bisphosphate, inositol-3,4,5-trisphosphate and inositol-1,3,4,5-tetrakisphosphate, suggesting it is recruited to membranes that contain lipids with a phosphoinositide headgroup. The sequence is that of Astrotactin-2 (Astn2) from Mus musculus (Mouse).